Here is a 125-residue protein sequence, read N- to C-terminus: Ribonuclease P protein component (125 aa).

Belongs to the RnpA family. In terms of assembly, consists of a catalytic RNA component (M1 or rnpB) and a protein subunit.

It catalyses the reaction Endonucleolytic cleavage of RNA, removing 5'-extranucleotides from tRNA precursor.. Its function is as follows. RNaseP catalyzes the removal of the 5'-leader sequence from pre-tRNA to produce the mature 5'-terminus. It can also cleave other RNA substrates such as 4.5S RNA. The protein component plays an auxiliary but essential role in vivo by binding to the 5'-leader sequence and broadening the substrate specificity of the ribozyme. The chain is Ribonuclease P protein component from Clostridium beijerinckii (strain ATCC 51743 / NCIMB 8052) (Clostridium acetobutylicum).